Reading from the N-terminus, the 557-residue chain is Anti-Muellerian hormone type-2 receptor (557 aa).

The signal sequence occupies residues M1–V17. Residues S18 to P144 are Extracellular-facing. 2 disulfides stabilise this stretch: C55-C79 and C92-C109. An N-linked (GlcNAc...) asparagine glycan is attached at N66. N-linked (GlcNAc...) asparagine glycosylation occurs at N119. The chain crosses the membrane as a helical span at residues I145–L165. The Cytoplasmic portion of the chain corresponds to A166–S557. The Protein kinase domain maps to L201–V511. Residues I207–V215 and K228 contribute to the ATP site. The active-site Proton acceptor is D331.

Belongs to the protein kinase superfamily. TKL Ser/Thr protein kinase family. TGFB receptor subfamily. In terms of assembly, interacts with type I receptor ACVR1. Mg(2+) is required as a cofactor. It depends on Mn(2+) as a cofactor.

The protein localises to the membrane. It carries out the reaction L-threonyl-[receptor-protein] + ATP = O-phospho-L-threonyl-[receptor-protein] + ADP + H(+). It catalyses the reaction L-seryl-[receptor-protein] + ATP = O-phospho-L-seryl-[receptor-protein] + ADP + H(+). In terms of biological role, on ligand binding, forms a receptor complex consisting of two type II and two type I transmembrane serine/threonine kinases. Type II receptors phosphorylate and activate type I receptors which autophosphorylate, then bind and activate SMAD transcriptional regulators. Receptor for anti-Muellerian hormone. This chain is Anti-Muellerian hormone type-2 receptor (Amhr2), found in Rattus norvegicus (Rat).